The chain runs to 251 residues: MGLMQKFDEPNIITTSTDKLFNWARKNSLWPLQFGLACCAIEMMSTGMAHNDLERFGAGFFAGSPRQADVMIVSGTVSTKMAERMTRLYEQMPEPKWVIAMGACAISGGPFLDGYSVLMGADRVIPVDVYVPGCPPRPEALIFGIMTLQKKIEREQQVGYEKPRPALVDEEGNIREYLPEREYRQISEGKAHRPKGIKRLPRTYVFQRKGLPPGSMTDVGWIPPEARERLKAGRGAGASGSGEREEGKEGA.

[4Fe-4S] cluster-binding residues include C38, C39, C104, and C134. The segment at 208–251 (RKGLPPGSMTDVGWIPPEARERLKAGRGAGASGSGEREEGKEGA) is disordered. The segment covering 242 to 251 (GEREEGKEGA) has biased composition (basic and acidic residues).

Belongs to the complex I 20 kDa subunit family. NDH-1 is composed of 14 different subunits. Subunits NuoB, C, D, E, F, and G constitute the peripheral sector of the complex. Requires [4Fe-4S] cluster as cofactor.

The protein resides in the cell membrane. The enzyme catalyses a quinone + NADH + 5 H(+)(in) = a quinol + NAD(+) + 4 H(+)(out). In terms of biological role, NDH-1 shuttles electrons from NADH, via FMN and iron-sulfur (Fe-S) centers, to quinones in the respiratory chain. The immediate electron acceptor for the enzyme in this species is believed to be a menaquinone. Couples the redox reaction to proton translocation (for every two electrons transferred, four hydrogen ions are translocated across the cytoplasmic membrane), and thus conserves the redox energy in a proton gradient. This is NADH-quinone oxidoreductase subunit B from Rubrobacter xylanophilus (strain DSM 9941 / JCM 11954 / NBRC 16129 / PRD-1).